The chain runs to 299 residues: Probable lipid kinase YegS (299 aa).

The DAGKc domain occupies alanine 2 to threonine 133. ATP-binding positions include threonine 40, glycine 66–glutamate 72, and threonine 95. Mg(2+) is bound by residues leucine 215, aspartate 218, and leucine 220. The Proton acceptor role is filled by glutamate 271.

The protein belongs to the diacylglycerol/lipid kinase family. YegS lipid kinase subfamily. Mg(2+) serves as cofactor. The cofactor is Ca(2+).

The protein localises to the cytoplasm. In terms of biological role, probably phosphorylates lipids; the in vivo substrate is unknown. The sequence is that of Probable lipid kinase YegS from Shigella flexneri.